The sequence spans 160 residues: Large ribosomal subunit protein bL19 (160 aa).

Composition is skewed to basic and acidic residues over residues 1 to 15 (MTED…KEES) and 28 to 39 (ATRETKPKDSPS). The disordered stretch occupies residues 1 to 44 (MTEDLKNTSPSKEESNEIEESSKATPKATRETKPKDSPSKTKLS).

This sequence belongs to the bacterial ribosomal protein bL19 family.

In terms of biological role, this protein is located at the 30S-50S ribosomal subunit interface and may play a role in the structure and function of the aminoacyl-tRNA binding site. The polypeptide is Large ribosomal subunit protein bL19 (Prochlorococcus marinus (strain SARG / CCMP1375 / SS120)).